The sequence spans 464 residues: GDNF family receptor alpha-2 (464 aa).

Positions Met-1–Ala-21 are cleaved as a signal peptide. Disulfide bonds link Cys-40–Cys-93, Cys-47–Cys-53, Cys-63–Cys-78, Cys-95–Cys-105, Cys-161–Cys-222, Cys-168–Cys-174, Cys-185–Cys-200, Cys-195–Cys-241, Cys-224–Cys-229, Cys-251–Cys-323, Cys-258–Cys-264, Cys-275–Cys-293, Cys-285–Cys-347, and Cys-325–Cys-335. An N-linked (GlcNAc...) asparagine glycan is attached at Asn-52. Asn-357 carries an N-linked (GlcNAc...) asparagine glycan. Positions Met-363–Thr-392 are disordered. The span at Thr-381–Thr-392 shows a compositional bias: low complexity. N-linked (GlcNAc...) asparagine glycosylation occurs at Asn-413. Ser-443 carries GPI-anchor amidated serine lipidation. Residues Cys-444 to Gln-464 constitute a propeptide, removed in mature form.

This sequence belongs to the GDNFR family. As to quaternary structure, interacts with NRTN ligand and RET: forms a 2:2:2 ternary complex composed of NRTN ligand, GFRA2 and RET receptor. Also forms a 4:4:4 tetrameric complex composed of 4 copies of NRTN ligand, GFRA2 and RET receptor, which prevents endocytosis of RET. Interacts with SORL1. As to expression, neurons of the superior cervical and dorsal root ganglia, and adult brain and testis. Low level in the substantia nigra, spleen and adrenal gland. Isoform 1, isoform 2 and isoform 3 are all expressed in brain, liver, ileum, spleen, heart and kidney. In brain, isoform 1 is most abundant, isoform 2 slightly less and isoform 3 is lowest. No significant levels of isoform 1, isoform 2 or isoform 3 expression in testis.

It localises to the cell membrane. Its function is as follows. Receptor for neurturin (NRTN), a growth factor that supports the survival of sympathetic neurons. NRTN-binding leads to autophosphorylation and activation of the RET receptor. Also able to mediate GDNF signaling through the RET tyrosine kinase receptor. Functionally, participates in NRTN-induced 'Ser-727' phosphorylation of STAT3. The polypeptide is GDNF family receptor alpha-2 (Mus musculus (Mouse)).